Here is a 144-residue protein sequence, read N- to C-terminus: Large ribosomal subunit protein uL13 (144 aa).

The protein belongs to the universal ribosomal protein uL13 family. As to quaternary structure, part of the 50S ribosomal subunit.

Its function is as follows. This protein is one of the early assembly proteins of the 50S ribosomal subunit, although it is not seen to bind rRNA by itself. It is important during the early stages of 50S assembly. The chain is Large ribosomal subunit protein uL13 from Herpetosiphon aurantiacus (strain ATCC 23779 / DSM 785 / 114-95).